A 364-amino-acid chain; its full sequence is UDP-arabinopyranose mutase 1 (364 aa).

The short motif at 110–112 (DDD) is the DXD motif element. The N-linked (Glc...) arginine glycan is linked to Arg158.

The protein belongs to the RGP family. As to quaternary structure, heteromers with UAM2 and UAM3. It depends on Mn(2+) as a cofactor. Mg(2+) is required as a cofactor. Post-translationally, reversibly glycosylated in vitro at Arg-158 by UDP-glucose. Reversibly glycosylated by UDP-xylose and UDP-galactose.

It localises to the golgi apparatus. The catalysed reaction is UDP-beta-L-arabinofuranose = UDP-beta-L-arabinopyranose. UDP-L-arabinose mutase involved in the biosynthesis of cell wall non-cellulosic polysaccharides. Catalyzes the interconvertion of UDP-L-arabinopyranose (UDP-Arap) and UDP-L-arabinofuranose (UDP-Araf). Preferentially catalyzes the formation of UDP-Arap from UDP-Araf. At thermodynamic equilibrium in vitro the ratio of the pyranose form over the furanose form is 90:10. Is probably active as heteromer in vivo. In Oryza sativa subsp. japonica (Rice), this protein is UDP-arabinopyranose mutase 1.